Consider the following 118-residue polypeptide: Large ribosomal subunit protein bL20 (118 aa).

This sequence belongs to the bacterial ribosomal protein bL20 family.

Its function is as follows. Binds directly to 23S ribosomal RNA and is necessary for the in vitro assembly process of the 50S ribosomal subunit. It is not involved in the protein synthesizing functions of that subunit. The protein is Large ribosomal subunit protein bL20 of Parvibaculum lavamentivorans (strain DS-1 / DSM 13023 / NCIMB 13966).